A 120-amino-acid chain; its full sequence is Large ribosomal subunit protein eL18 (120 aa).

Belongs to the eukaryotic ribosomal protein eL18 family.

The sequence is that of Large ribosomal subunit protein eL18 from Thermococcus onnurineus (strain NA1).